The following is a 107-amino-acid chain: Snaclec VP12 subunit A (107 aa).

Intrachain disulfides connect C4–C15 and C32–C107. One can recognise a C-type lectin domain in the interval 11 to 107; that stretch reads YEGNCYKAFD…ECGLAYPFIC (97 aa).

This sequence belongs to the snaclec family. Heterodimer of subunits alpha and beta; disulfide-linked. In terms of tissue distribution, expressed by the venom gland.

It localises to the secreted. Inhibits integrin alpha-2/beta-1- (ITGA2/ITGB1) dependent melanoma metastasis. This Daboia palaestinae (Palestine viper) protein is Snaclec VP12 subunit A.